A 246-amino-acid chain; its full sequence is 3-oxoacyl-[acyl-carrier-protein] reductase FabG (246 aa).

Residues Gly11–Arg14, Ser36, Asp62–Val63, and Asn89 each bind NADP(+). Ser141 lines the substrate pocket. The active-site Proton acceptor is the Tyr154. NADP(+) contacts are provided by residues Tyr154–Lys158 and Ile187.

The protein belongs to the short-chain dehydrogenases/reductases (SDR) family. As to quaternary structure, homotetramer.

The catalysed reaction is a (3R)-hydroxyacyl-[ACP] + NADP(+) = a 3-oxoacyl-[ACP] + NADPH + H(+). It participates in lipid metabolism; fatty acid biosynthesis. Functionally, catalyzes the NADPH-dependent reduction of beta-ketoacyl-ACP substrates to beta-hydroxyacyl-ACP products, the first reductive step in the elongation cycle of fatty acid biosynthesis. The sequence is that of 3-oxoacyl-[acyl-carrier-protein] reductase FabG (fabG) from Bacillus subtilis (strain 168).